Consider the following 282-residue polypeptide: Short-chain dehydrogenase/reductase prx7 (282 aa).

NADP(+) is bound by residues Asn-23, Asn-70, Tyr-150, Lys-154, Val-183, and Thr-185. Tyr-150 acts as the Proton acceptor in catalysis. Lys-154 acts as the Lowers pKa of active site Tyr in catalysis.

It belongs to the short-chain dehydrogenases/reductases (SDR) family.

It functions in the pathway sesquiterpene biosynthesis. Its function is as follows. Short-chain dehydrogenase/reductase; part of the gene cluster that mediates the biosynthesis of PR-toxin, a bicyclic sesquiterpene belonging to the eremophilane class and acting as a mycotoxin. The first step of the pathway is catalyzed by the aristolochene synthase which performs the cyclization of trans,trans-farnesyl diphosphate (FPP) to the bicyclic sesquiterpene aristolochene. Following the formation of aristolochene, the non-oxygenated aristolochene is converted to the trioxygenated intermediate eremofortin B, via 7-epi-neopetasone. This conversion appears to involve three enzymes, a hydroxysterol oxidase-like enzyme, the quinone-oxidase prx3 that forms the quinone-type-structure in the bicyclic nucleus of aristolochene with the C8-oxo group and the C-3 hydroxyl group, and the P450 monooxygenase prx9 that introduces the epoxide at the double bond between carbons 1 and 2. No monoxy or dioxy-intermediates have been reported to be released to the broth, so these three early oxidative reactions may be coupled together. Eremofortin B is further oxidized by another P450 monooxygenase, that introduces a second epoxide between carbons 7 and 11 prior to acetylation to eremofortin A by the acetyltransferase prx11. The second epoxidation may be performed by a second P450 monooxygenase. After the acetylation step, eremofortin A is converted to eremofortin C and then to PR-toxin. First the conversion of eremofortin A to eremofortin C proceeds by oxidation of the side chain of the molecule at C-12 and is catalyzed by the short-chain oxidoreductase prx1. The cytochrome P450 monooxygenase prx8 also plays a role in this step. The primary alcohol formed at C-12 is finally oxidized by the short-chain alcohol dehydrogenase prx4 that forms PR-toxin. The chain is Short-chain dehydrogenase/reductase prx7 from Penicillium rubens (strain ATCC 28089 / DSM 1075 / NRRL 1951 / Wisconsin 54-1255) (Penicillium chrysogenum).